The sequence spans 199 residues: Putative acetyltransferase SAR2635 (199 aa).

It belongs to the transferase hexapeptide repeat family.

This chain is Putative acetyltransferase SAR2635, found in Staphylococcus aureus (strain MRSA252).